Here is an 859-residue protein sequence, read N- to C-terminus: Cadherin-related family member 1 (859 aa).

Residues 1 to 19 (MRRCRWAALALGLLRLCLA) form the signal peptide. At 20–700 (QANFAPHFFD…LIQTKDNPMK (681 aa)) the chain is on the extracellular side. 6 Cadherin domains span residues 36–135 (NGNM…APRF), 136–246 (IQEP…APVF), 247–353 (VGTP…PPTF), 359–472 (PQNR…VPKF), 473–576 (DSLY…PPQF), and 573–688 (PPQF…SPMA). Residues N58 and N89 are each glycosylated (N-linked (GlcNAc...) asparagine). N-linked (GlcNAc...) asparagine glycosylation is present at N296. The helical transmembrane segment at 701–721 (AVGVLAGTMATVVAITVLIST) threads the bilayer. The Cytoplasmic segment spans residues 722–859 (ATFWRNKKSN…KKSVHNKAYF (138 aa)). The tract at residues 770–838 (KEKPPNENCN…PKTMGSPVQS (69 aa)) is disordered. The span at 775–791 (NENCNNNSPESSLLPRA) shows a compositional bias: low complexity.

Interacts with PROM1. Post-translationally, undergoes proteolytic cleavage; produces a soluble 95 kDa N-terminal fragment and a 25 kDa cell-associated C-terminal fragment.

The protein localises to the cell membrane. Its function is as follows. Potential calcium-dependent cell-adhesion protein. May be required for the structural integrity of the outer segment (OS) of photoreceptor cells. The polypeptide is Cadherin-related family member 1 (Homo sapiens (Human)).